The sequence spans 216 residues: 3-keto-L-gulonate-6-phosphate decarboxylase UlaD (216 aa).

D11 provides a ligand contact to substrate. Positions 33 and 62 each coordinate Mg(2+). Substrate is bound at residue R192.

It belongs to the HPS/KGPDC family. KGPDC subfamily. As to quaternary structure, homodimer. Mg(2+) serves as cofactor.

The catalysed reaction is 3-dehydro-L-gulonate 6-phosphate + H(+) = L-xylulose 5-phosphate + CO2. It functions in the pathway cofactor degradation; L-ascorbate degradation; D-xylulose 5-phosphate from L-ascorbate: step 2/4. Catalyzes the decarboxylation of 3-keto-L-gulonate-6-P into L-xylulose-5-P. Is involved in the anaerobic L-ascorbate utilization. In Escherichia fergusonii (strain ATCC 35469 / DSM 13698 / CCUG 18766 / IAM 14443 / JCM 21226 / LMG 7866 / NBRC 102419 / NCTC 12128 / CDC 0568-73), this protein is 3-keto-L-gulonate-6-phosphate decarboxylase UlaD.